Here is a 312-residue protein sequence, read N- to C-terminus: Putative B3 domain-containing protein Os10g0537100 (312 aa).

Residues 35 to 153 (FEKVVTPSDV…RLFIDFRRRR (119 aa)) constitute a DNA-binding region (TF-B3). Disordered stretches follow at residues 161 to 182 (FPPT…HPPL) and 286 to 312 (LLQL…DLGL). The span at 170 to 180 (HSHHHHQRHHP) shows a compositional bias: basic residues. Positions 286–301 (LLQLPSPSSSTSSSTA) are enriched in low complexity.

The protein localises to the nucleus. The protein is Putative B3 domain-containing protein Os10g0537100 of Oryza sativa subsp. japonica (Rice).